Consider the following 850-residue polypeptide: RPA-related protein RADX (850 aa).

The interval Met-1 to Gly-31 is disordered. A DNA-binding region (OB) is located at residues Trp-228–Asn-331. 2 disordered regions span residues Glu-575 to Gln-612 and Gly-632 to Arg-671. Positions Gly-590 to Pro-608 are enriched in basic and acidic residues. Residues Pro-643 to Gly-668 show a composition bias toward polar residues.

The protein resides in the chromosome. Functionally, single-stranded DNA-binding protein recruited to replication forks to maintain genome stability. Prevents fork collapse by antagonizing the accumulation of RAD51 at forks to ensure the proper balance of fork remodeling and protection without interfering with the capacity of cells to complete homologous recombination of double-strand breaks. The sequence is that of RPA-related protein RADX from Mus musculus (Mouse).